The following is a 235-amino-acid chain: Uridylate kinase (235 aa).

Residue 9 to 12 (KLSG) participates in ATP binding. The segment at 17–22 (GKDGYG) is involved in allosteric activation by GTP. Gly-51 lines the UMP pocket. ATP is bound by residues Gly-52 and Arg-56. UMP contacts are provided by residues Asp-71 and 132 to 139 (TGNPYFTT). Residues Thr-159, Tyr-165, and Asp-168 each coordinate ATP.

This sequence belongs to the UMP kinase family. In terms of assembly, homohexamer.

The protein localises to the cytoplasm. The enzyme catalyses UMP + ATP = UDP + ADP. It functions in the pathway pyrimidine metabolism; CTP biosynthesis via de novo pathway; UDP from UMP (UMPK route): step 1/1. Its activity is regulated as follows. Allosterically activated by GTP. Inhibited by UTP. Functionally, catalyzes the reversible phosphorylation of UMP to UDP. In Chlorobium luteolum (strain DSM 273 / BCRC 81028 / 2530) (Pelodictyon luteolum), this protein is Uridylate kinase.